The primary structure comprises 417 residues: Mast cell carboxypeptidase A (417 aa).

The N-terminal stretch at 1 to 15 (MRFFLLMAVIYTTLA) is a signal peptide. A propeptide spans 16–109 (IAPVHFDREK…IEKQFDVKDE (94 aa)) (activation peptide). The Peptidase M14 domain maps to 118 to 412 (KYNDWDKIVS…LSVKFIAKYI (295 aa)). 2 disulfide bridges follow: Cys173–Cys186 and Cys245–Cys268. Zn(2+) contacts are provided by His176 and Glu179. His304 contacts Zn(2+). Glu378 functions as the Proton donor/acceptor in the catalytic mechanism.

This sequence belongs to the peptidase M14 family. Requires Zn(2+) as cofactor.

The protein localises to the cytoplasmic vesicle. The protein resides in the secretory vesicle. The enzyme catalyses Release of a C-terminal amino acid, but little or no action with -Asp, -Glu, -Arg, -Lys or -Pro.. This Mus musculus (Mouse) protein is Mast cell carboxypeptidase A (Cpa3).